Reading from the N-terminus, the 201-residue chain is Protein GrpE (201 aa).

The protein belongs to the GrpE family. In terms of assembly, homodimer.

It is found in the cytoplasm. Its function is as follows. Participates actively in the response to hyperosmotic and heat shock by preventing the aggregation of stress-denatured proteins, in association with DnaK and GrpE. It is the nucleotide exchange factor for DnaK and may function as a thermosensor. Unfolded proteins bind initially to DnaJ; upon interaction with the DnaJ-bound protein, DnaK hydrolyzes its bound ATP, resulting in the formation of a stable complex. GrpE releases ADP from DnaK; ATP binding to DnaK triggers the release of the substrate protein, thus completing the reaction cycle. Several rounds of ATP-dependent interactions between DnaJ, DnaK and GrpE are required for fully efficient folding. The protein is Protein GrpE of Shewanella denitrificans (strain OS217 / ATCC BAA-1090 / DSM 15013).